We begin with the raw amino-acid sequence, 304 residues long: MVAEGLCQCYIRRMSTGGPHGAAPDRSCLARDTEGRSPCKNCQGCTQGAADPIPIRILMADSDVEQAPSVSVLPRNKILILAPAGKAYQAEVIRDLFNIEASESDRIVRDVKWSNKYYEVDLDLYIDSYESLQTWGAEFCSDECADLRDVVAGIFLVFEETEDAETFQQLIEDCHFTDERVLVACDLSSAEHPASLERALEVHDVALVRWRERGTNELGEQQGRERVRELLDIHPWSERMLRMHASTAAALAELDPLQADIPLDSVVTRIKQARERYLEITDVHAADEYAARIAHELTEQLLPE.

The protein belongs to the IRC6 family.

Functionally, involved in gross chromosomal rearrangements (GCRs) and telomere healing. The polypeptide is Increased recombination centers protein 6 (IRC6) (Eremothecium gossypii (strain ATCC 10895 / CBS 109.51 / FGSC 9923 / NRRL Y-1056) (Yeast)).